A 185-amino-acid chain; its full sequence is RRM domain-containing protein ECU09_1470 (185 aa).

RRM domains lie at 8 to 87 (NQLA…YAKR) and 101 to 170 (KKVY…PAYE).

In Encephalitozoon cuniculi (strain GB-M1) (Microsporidian parasite), this protein is RRM domain-containing protein ECU09_1470.